Consider the following 258-residue polypeptide: MRVLCTNDDGVNAPGLKVIEEIADQLSDDVWIVAPELDQSGVSHSLSLNDPLRLREIGPRLFAVRGTPTDCVIMGSRHVLGDKQPNLVLSGVNKGRNVAEDVVYSGTIAGALEGTILGLPSFALSQEFGGPQNRDKPMWDVARAFGADVIRKVMSVGVPTDTVININFPACAPEEVKGVVVTRQGKRNQGFLRIDGHYDGRGNPYYWIGFEKFPVPDIPGEGTDLAALEGNYVSVTPLRLDRTDMRFSEQLANLFNTP.

Positions 8, 9, 40, and 93 each coordinate a divalent metal cation.

This sequence belongs to the SurE nucleotidase family. A divalent metal cation serves as cofactor.

The protein resides in the cytoplasm. The catalysed reaction is a ribonucleoside 5'-phosphate + H2O = a ribonucleoside + phosphate. Its function is as follows. Nucleotidase that shows phosphatase activity on nucleoside 5'-monophosphates. The chain is 5'-nucleotidase SurE from Afipia carboxidovorans (strain ATCC 49405 / DSM 1227 / KCTC 32145 / OM5) (Oligotropha carboxidovorans).